The primary structure comprises 1303 residues: MDEDEQNRYVAQLKDEFDSCDTTGTGYLDKEELTALCHKLSLDAHLPLLLDTLLGPQHYARVNFEEFKEGFVAVLSRSLDFSTSEEESSYLEPAVPEEVKPKYVKGTKRYGRRSRPDKTDLELTADSDSLPFGTDKVEANGVRRAKLRRSTSLESVESLKSDEDTGSNKESTHHYFVAQGQLKLWNQDGTGNCQRSSDNQQEVTDGQVRAVWEELGVGAAGSLNREELSLVCDHIGLKHLEAEELDALFRKLDKDQDGKVSLIEFQSGLFKPHDHASPLSTSTPARPKPLRTISKALEERVVRSTSPSLLSATVGQRLLTRLDDGSGCTSPEKVMALWTEEGIHNSRDILQTQTLDFSLEERLCLAELTLALDNELLVSGNGIHQAALVSYKNEINYLQVLADQACQERDKAKADLEQADRRNLQLVREVDDRHATMESLNESKIKDLEQEFRDKLTALRSESEYESEVLLEQVEKERERLRDELQLLRSQDISLQEDMCTTVNENRRLEEEVSALKEKLTEAESAISKLQNDLDRLLQDKYDGLDANGTGLLNQEEQFTEIFKEYEQQCRELQDRNDELCSELELLKSQGSGKRTRLSRSSLPANDWSNRRALTTESDSDDPEMKKGTSPQVRKKLQVTDKNVLGSLESLAPPVSIETELAMEKMKERYEQEVQDLKIQLETKVNFYERSMDLMRQNMEVERKDISQSFKMEISELEDLKARAEERAEQMRQTTERLEAELRGKTSGGAWGQEQERRIQRERAELEQNYAREISNLVLRLTSEKDQLEAELKLRMDREVLLVRAQLDEVTSENCALKDRLAVLQQDVKSLEEDVNNKRKKLEEMEKGYMKNREDEERLRKENSKCREEVLDLSARNLQLSSENAELSSRLCTDQRAVQTLTDRLAQVCQERDAAAVSSKQLQENLQQQENHGLRLQEQWRKEKELLERELQTAKEALQHLTVVESALTSQTLKNKSLEQDKESLLKETAENDQKLKKLQEALRNSETQIEQLNAQILTMWQEKDVHVQEAAAHIKMLQQSQDKVQELEERISQLRKEKEQVQHTHRLQEETAVSVLQNECKSLRVQNKELQNKVAQLQSRELELQRLTHECLTLRNKQAELETAKQEANQQAMRAESTRSMVQAQHTREIQELKEQMGSGTQEHASHLQTQLAEQQRRTQDFEDLLRSQAKQASVQMGLQQEQYEKLMASMQERMDEVEAKLKNTRVMLQEKVNQLKEQLAKNSKSDVLLKDLYVENSQLMKALQVTEQRQKSAEKKSFLLEEKVIALNKLLRKIAPASLTA.

2 EF-hand domains span residues 8 to 43 (RYVA…LSLD) and 61 to 77 (RVNF…VLSR). Residues 107 to 135 (TKRYGRRSRPDKTDLELTADSDSLPFGTD) form a disordered region. 2 consecutive EF-hand domains span residues 203–238 (VTDG…IGLK) and 240–275 (LEAE…PHDH). Ca(2+) contacts are provided by D253, D255, D257, K259, and E264. The stretch at 464–590 (EYESEVLLEQ…CSELELLKSQ (127 aa)) forms a coiled coil. Polar residues predominate over residues 592-617 (SGKRTRLSRSSLPANDWSNRRALTTE). The tract at residues 592 to 634 (SGKRTRLSRSSLPANDWSNRRALTTESDSDDPEMKKGTSPQVR) is disordered. 3 coiled-coil regions span residues 660-791 (ELAM…LEAE), 821-876 (LAVL…LSAR), and 919-1146 (SKQL…VQAQ). Positions 1156-1181 (EQMGSGTQEHASHLQTQLAEQQRRTQ) are disordered. Over residues 1159–1175 (GSGTQEHASHLQTQLAE) the composition is skewed to polar residues. The stretch at 1202–1278 (QEQYEKLMAS…EQRQKSAEKK (77 aa)) forms a coiled coil.

It localises to the cytoplasm. The protein localises to the cytoskeleton. The protein resides in the microtubule organizing center. It is found in the centrosome. Functionally, required for the intracellular transport of organelles and vesicles, and is essential for the photoreceptor's outer segments formation, maintenance and function. This is Ninein-like protein (Ninl) from Danio rerio (Zebrafish).